The following is a 94-amino-acid chain: Pyrimidine/purine nucleoside phosphorylase (94 aa).

Belongs to the nucleoside phosphorylase PpnP family.

The enzyme catalyses a purine D-ribonucleoside + phosphate = a purine nucleobase + alpha-D-ribose 1-phosphate. It catalyses the reaction adenosine + phosphate = alpha-D-ribose 1-phosphate + adenine. It carries out the reaction cytidine + phosphate = cytosine + alpha-D-ribose 1-phosphate. The catalysed reaction is guanosine + phosphate = alpha-D-ribose 1-phosphate + guanine. The enzyme catalyses inosine + phosphate = alpha-D-ribose 1-phosphate + hypoxanthine. It catalyses the reaction thymidine + phosphate = 2-deoxy-alpha-D-ribose 1-phosphate + thymine. It carries out the reaction uridine + phosphate = alpha-D-ribose 1-phosphate + uracil. The catalysed reaction is xanthosine + phosphate = alpha-D-ribose 1-phosphate + xanthine. Its function is as follows. Catalyzes the phosphorolysis of diverse nucleosides, yielding D-ribose 1-phosphate and the respective free bases. Can use uridine, adenosine, guanosine, cytidine, thymidine, inosine and xanthosine as substrates. Also catalyzes the reverse reactions. This is Pyrimidine/purine nucleoside phosphorylase from Escherichia coli (strain ATCC 8739 / DSM 1576 / NBRC 3972 / NCIMB 8545 / WDCM 00012 / Crooks).